The following is a 249-amino-acid chain: Proteasome activator complex subunit 1 (249 aa).

The disordered stretch occupies residues 60–101 (PLDIPVPDPVKEKEKGERKKQQEKEDKDEKKKGEDEDKGPPC). The span at 68–98 (PVKEKEKGERKKQQEKEDKDEKKKGEDEDKG) shows a compositional bias: basic and acidic residues.

Belongs to the PA28 family. As to quaternary structure, heterodimer of PSME1 and PSME2, which forms a hexameric ring. PSME1 can form homoheptamers.

In terms of biological role, implicated in immunoproteasome assembly and required for efficient antigen processing. The PA28 activator complex enhances the generation of class I binding peptides by altering the cleavage pattern of the proteasome. The polypeptide is Proteasome activator complex subunit 1 (PSME1) (Macaca fascicularis (Crab-eating macaque)).